The sequence spans 558 residues: Poly(A) polymerase PAPalpha (558 aa).

A compositionally biased stretch (polar residues) spans 1–17 (MNTKTYGVTEPISTNGP). The interval 1–20 (MNTKTYGVTEPISTNGPTPK) is disordered. ATP is bound by residues 86 to 88 (FGS), 99 to 101 (DID), aspartate 153, lysine 214, tyrosine 223, and 232 to 233 (GV). 3 residues coordinate Mg(2+): aspartate 99, aspartate 101, and aspartate 153. Residues 516–558 (VYEDGEERPKKSGKKRKKVIKEDGQKRVRNESPASSASVNGSS) are disordered. The segment covering 535-545 (IKEDGQKRVRN) has biased composition (basic and acidic residues). Positions 547–558 (SPASSASVNGSS) are enriched in low complexity.

Belongs to the poly(A) polymerase family. The cofactor is Mg(2+). Mn(2+) serves as cofactor.

The protein localises to the nucleus. The catalysed reaction is RNA(n) + ATP = RNA(n)-3'-adenine ribonucleotide + diphosphate. In terms of biological role, polymerase that creates the 3'-poly(A) tail of mRNA's. May acquire specificity through interaction with a cleavage and polyadenylation factor. This Candida albicans (strain SC5314 / ATCC MYA-2876) (Yeast) protein is Poly(A) polymerase PAPalpha (PAPALPHA).